Consider the following 20-residue polypeptide: Collagenolytic protease 36 kDa C (20 aa).

Positions 1–20 (IVGGSEATSGQFPYQXSFQD) constitute a Peptidase S1 domain. Residues 1-20 (IVGGSEATSGQFPYQXSFQD) form a disordered region.

It belongs to the peptidase S1 family.

It catalyses the reaction Hydrolysis of proteins, with broad specificity for peptide bonds. Native collagen is cleaved about 75% of the length of the molecule from the N-terminus. Low activity on small molecule substrates of both trypsin and chymotrypsin.. Its function is as follows. This enzyme is a serine protease capable of degrading the native triple helix of collagen. The polypeptide is Collagenolytic protease 36 kDa C (Paralithodes camtschaticus (Red king crab)).